Reading from the N-terminus, the 456-residue chain is Cytochrome c biogenesis protein CcsB (456 aa).

A run of 3 helical transmembrane segments spans residues 29-49 (LRLA…GTVI), 88-108 (AGWF…CTFR), and 174-194 (VGPI…IWGS).

Belongs to the Ccs1/CcsB family. May interact with CcsA.

The protein localises to the cellular thylakoid membrane. Functionally, required during biogenesis of c-type cytochromes (cytochrome c6 and cytochrome f) at the step of heme attachment. The chain is Cytochrome c biogenesis protein CcsB from Synechococcus sp. (strain ATCC 27144 / PCC 6301 / SAUG 1402/1) (Anacystis nidulans).